A 1220-amino-acid chain; its full sequence is Polycomb protein Sfmbt (1220 aa).

The segment at P322–R357 adopts an FCS-type zinc-finger fold. Zn(2+)-binding residues include C331, C334, C351, and C355. Disordered stretches follow at residues G371–S399 and D464–S483. Over residues E473 to L482 the composition is skewed to polar residues. MBT repeat units follow at residues Y536–P647, K655–P753, L761–P871, and F879–P975. 2 disordered regions span residues P976–K1024 and N1050–G1092. Over residues K991 to K1000 the composition is skewed to basic residues. The segment covering Q1052–G1068 has biased composition (acidic residues). The segment covering S1071–Q1082 has biased composition (polar residues). The segment covering S1083–G1092 has biased composition (low complexity). Positions W1140–K1203 constitute an SAM domain.

Interacts with pho as a component of the pho-repressive complex (PhoRC).

The protein localises to the nucleus. In terms of biological role, polycomb group (PcG) protein that binds to the Polycomb response elements (PREs) found in the regulatory regions of many genes. PcG proteins act by forming multiprotein complexes, which are required to maintain the transcriptionally repressive state of homeotic genes throughout development. PcG proteins are not required to initiate repression, but to maintain it during later stages of development. They probably act via the methylation of histones, rendering chromatin heritably changed in its expressibility. Necessary but not sufficient to recruit a functional PcG repressive complex that represses target genes, suggesting that the recruitment of the distinct PRC1 complex is also required to allow a subsequent repression. The sequence is that of Polycomb protein Sfmbt from Drosophila melanogaster (Fruit fly).